The primary structure comprises 376 residues: Cobalt-precorrin-5B C(1)-methyltransferase (376 aa).

Belongs to the CbiD family.

The enzyme catalyses Co-precorrin-5B + S-adenosyl-L-methionine = Co-precorrin-6A + S-adenosyl-L-homocysteine. It participates in cofactor biosynthesis; adenosylcobalamin biosynthesis; cob(II)yrinate a,c-diamide from sirohydrochlorin (anaerobic route): step 6/10. Its function is as follows. Catalyzes the methylation of C-1 in cobalt-precorrin-5B to form cobalt-precorrin-6A. This chain is Cobalt-precorrin-5B C(1)-methyltransferase, found in Bradyrhizobium sp. (strain BTAi1 / ATCC BAA-1182).